A 171-amino-acid chain; its full sequence is MIYPYKEHKPDIHPTAFIADNATITGDVVIGEQSSIWFSVVIRGDVAPTRIGNRVNIQDLSCLHQSPNKTLLIEDDATIGHQVTLHSAVIRKNALIGMGSIILDGAEIGEGAFIGAGSLVPPGKIIPPGHLAFGRPAKVIRPLTEEDRKDMQRIRSEYVEKGQYYKFLQQT.

This sequence belongs to the transferase hexapeptide repeat family.

This is an uncharacterized protein from Bacillus subtilis (strain 168).